The chain runs to 357 residues: MQSVQSTSFCLRKQCLCLTFLLLHLLGQVAATQRCPPQCPGRCPATPPTCAPGVRAVLDGCSCCLVCARQRGESCSDLEPCDESSGLYCDRSADPSNQTGICTAVEGDNCVFDGVIYRSGEKFQPSCKFQCTCRDGQIGCVPRCQLDVLLPEPNCPAPRKVEVPGECCEKWICGPDEEDSLGGLTLAAYRPEATLGVEVSDSSVNCIEQTTEWTACSKSCGMGFSTRVTNRNRQCEMLKQTRLCMVRPCEQEPEQPTDKKGKKCLRTKKSLKAIHLQFKNCTSLHTYKPRFCGVCSDGRCCTPHNTKTIQAEFQCSPGQIVKKPVMVIGTCTCHTNCPKNNEAFLQELELKTTRGKM.

The signal sequence occupies residues 1–31 (MQSVQSTSFCLRKQCLCLTFLLLHLLGQVAA). One can recognise an IGFBP N-terminal domain in the interval 32–105 (TQRCPPQCPG…SNQTGICTAV (74 aa)). 6 disulfide bridges follow: Cys-35/Cys-61, Cys-39/Cys-63, Cys-43/Cys-64, Cys-50/Cys-67, Cys-75/Cys-89, and Cys-81/Cys-102. N-linked (GlcNAc...) asparagine glycosylation is present at Asn-97. Residues 108 to 174 (DNCVFDGVIY…GECCEKWICG (67 aa)) enclose the VWFC domain. In terms of domain architecture, TSP type-1 spans 205-250 (NCIEQTTEWTACSKSCGMGFSTRVTNRNRQCEMLKQTRLCMVRPCE). Cys-244 is lipidated: S-palmitoyl cysteine. Cystine bridges form between Cys-264–Cys-301, Cys-281–Cys-315, Cys-292–Cys-331, Cys-295–Cys-333, and Cys-300–Cys-337. Residues 264 to 338 (CLRTKKSLKA…GTCTCHTNCP (75 aa)) form the CTCK domain. The N-linked (GlcNAc...) asparagine glycan is linked to Asn-280.

The protein belongs to the CCN family. In terms of assembly, interacts with FBLN1. Interacts (via CTCK domain) with NOTCH1 (via the EGF-like repeat region). Interacts with GJA1/CX43. Interacts with ITGA5:ITGB1, ITGAV:ITGB3 and ITGAV:ITGB5. Interacts with ZDHHC22; the interaction may lead to CCN3 palmitoylation. May be palmitoylated on Cys-244, which is important for extracellular secretion. In terms of tissue distribution, expressed in endothelial cells (at protein level). Expressed in bone marrow and thymic cells.

The protein localises to the secreted. It localises to the cytoplasm. It is found in the cell junction. The protein resides in the gap junction. Its function is as follows. Immediate-early protein playing a role in various cellular processes including proliferation, adhesion, migration, differentiation and survival. Acts by binding to integrins or membrane receptors such as NOTCH1. Essential regulator of hematopoietic stem and progenitor cell function. Inhibits myogenic differentiation through the activation of Notch-signaling pathway. Inhibits vascular smooth muscle cells proliferation by increasing expression of cell-cycle regulators such as CDKN2B or CDKN1A independently of TGFB1 signaling. Ligand of integrins ITGAV:ITGB3 and ITGA5:ITGB1, acts directly upon endothelial cells to stimulate pro-angiogenic activities and induces angiogenesis. In endothelial cells, supports cell adhesion, induces directed cell migration (chemotaxis) and promotes cell survival. Also plays a role in cutaneous wound healing acting as integrin receptor ligand. Supports skin fibroblast adhesion through ITGA5:ITGB1 and ITGA6:ITGB1 and induces fibroblast chemotaxis through ITGAV:ITGB5. Seems to enhance bFGF-induced DNA synthesis in fibroblasts. Involved in bone regeneration as a negative regulator. Enhances the articular chondrocytic phenotype, whereas it repressed the one representing endochondral ossification. Impairs pancreatic beta-cell function, inhibits beta-cell proliferation and insulin secretion. Plays a role as negative regulator of endothelial pro-inflammatory activation reducing monocyte adhesion, its anti-inflammatory effects occur secondary to the inhibition of NF-kappaB signaling pathway. Contributes to the control and coordination of inflammatory processes in atherosclerosis. Attenuates inflammatory pain through regulation of IL1B- and TNF-induced MMP9, MMP2 and CCL2 expression. Inhibits MMP9 expression through ITGB1 engagement. Brain osteoanabolic hormone. Drives osteogenesis in osteochondral skeletal stem cells. During lactation, maintains the maternal skeleton and viability of offspring. The protein is CCN family member 3 of Homo sapiens (Human).